Consider the following 199-residue polypeptide: dCTP deaminase, dUMP-forming (199 aa).

Residues 101-106, Asp119, 127-129, Gln148, Tyr162, and Gln174 each bind dCTP; these read KSSLGR and TLE. The Proton donor/acceptor role is filled by Glu129. A disordered region spans residues 163-199; that stretch reads GSAAAGSKYQGQRGPTPSRSYLNFPLPSDAVDAVESR. A compositionally biased stretch (polar residues) spans 171 to 183; sequence YQGQRGPTPSRSY.

The protein belongs to the dCTP deaminase family. Homotrimer.

The enzyme catalyses dCTP + 2 H2O = dUMP + NH4(+) + diphosphate. It functions in the pathway pyrimidine metabolism; dUMP biosynthesis; dUMP from dCTP: step 1/1. Its function is as follows. Bifunctional enzyme that catalyzes both the deamination of dCTP to dUTP and the hydrolysis of dUTP to dUMP without releasing the toxic dUTP intermediate. In Nocardia farcinica (strain IFM 10152), this protein is dCTP deaminase, dUMP-forming.